The following is a 468-amino-acid chain: 3-isopropylmalate dehydratase large subunit (468 aa).

Residues cysteine 347, cysteine 407, and cysteine 410 each coordinate [4Fe-4S] cluster.

Belongs to the aconitase/IPM isomerase family. LeuC type 1 subfamily. In terms of assembly, heterodimer of LeuC and LeuD. [4Fe-4S] cluster serves as cofactor.

The enzyme catalyses (2R,3S)-3-isopropylmalate = (2S)-2-isopropylmalate. It participates in amino-acid biosynthesis; L-leucine biosynthesis; L-leucine from 3-methyl-2-oxobutanoate: step 2/4. Functionally, catalyzes the isomerization between 2-isopropylmalate and 3-isopropylmalate, via the formation of 2-isopropylmaleate. The chain is 3-isopropylmalate dehydratase large subunit from Prochlorococcus marinus (strain SARG / CCMP1375 / SS120).